Here is a 461-residue protein sequence, read N- to C-terminus: 26S proteasome regulatory subunit 8 (461 aa).

An ATP-binding site is contributed by 185-192 (GPPGTGKT).

The protein belongs to the AAA ATPase family.

The protein localises to the cytoplasm. It localises to the nucleus. In terms of biological role, the 26S proteasome is involved in the ATP-dependent degradation of ubiquitinated proteins. The regulatory (or ATPase) complex confers ATP dependency and substrate specificity to the 26S complex. In Xenopus laevis (African clawed frog), this protein is 26S proteasome regulatory subunit 8 (psmc5).